We begin with the raw amino-acid sequence, 277 residues long: Acetyl-coenzyme A carboxylase carboxyl transferase subunit beta (277 aa).

In terms of domain architecture, CoA carboxyltransferase N-terminal spans 25 to 277 (LVRRCPVCHT…DLLRLHKGES (253 aa)). Positions 29, 32, 47, and 50 each coordinate Zn(2+). A C4-type zinc finger spans residues 29-50 (CPVCHTTFLTDHWEPTRLCPAC).

This sequence belongs to the AccD/PCCB family. In terms of assembly, acetyl-CoA carboxylase is a heterohexamer composed of biotin carboxyl carrier protein (AccB), biotin carboxylase (AccC) and two subunits each of ACCase subunit alpha (AccA) and ACCase subunit beta (AccD). Zn(2+) is required as a cofactor.

It localises to the cytoplasm. It catalyses the reaction N(6)-carboxybiotinyl-L-lysyl-[protein] + acetyl-CoA = N(6)-biotinyl-L-lysyl-[protein] + malonyl-CoA. Its pathway is lipid metabolism; malonyl-CoA biosynthesis; malonyl-CoA from acetyl-CoA: step 1/1. Functionally, component of the acetyl coenzyme A carboxylase (ACC) complex. Biotin carboxylase (BC) catalyzes the carboxylation of biotin on its carrier protein (BCCP) and then the CO(2) group is transferred by the transcarboxylase to acetyl-CoA to form malonyl-CoA. The chain is Acetyl-coenzyme A carboxylase carboxyl transferase subunit beta from Levilactobacillus brevis (strain ATCC 367 / BCRC 12310 / CIP 105137 / JCM 1170 / LMG 11437 / NCIMB 947 / NCTC 947) (Lactobacillus brevis).